The primary structure comprises 236 residues: Aquaporin Z (236 aa).

A run of 2 helical transmembrane segments spans residues 12–32 and 37–57; these read FFGTFWLVLGGCGSAVLAAGV and IGYAGVALAFGLTVLTMAYAV. The NPA 1 signature appears at 66-68; that stretch reads NPA. 3 helical membrane-spanning segments follow: residues 92–112, 136–156, and 163–183; these read VVGAIVAAATLASIAQGVAGF, AALICEIVLSAGFVFVILGAT, and GFAPIPIGLALTLIHLISIPV. An NPA 2 motif is present at residues 189–191; sequence NPA. Residues 197 to 217 traverse the membrane as a helical segment; that stretch reads ALFVGGWALEQLWLFWLAPIA.

Belongs to the MIP/aquaporin (TC 1.A.8) family. Homotetramer.

The protein localises to the cell inner membrane. It carries out the reaction H2O(in) = H2O(out). Functionally, channel that permits osmotically driven movement of water in both directions. It is involved in the osmoregulation and in the maintenance of cell turgor during volume expansion in rapidly growing cells. It mediates rapid entry or exit of water in response to abrupt changes in osmolarity. The polypeptide is Aquaporin Z (Bordetella bronchiseptica (strain ATCC BAA-588 / NCTC 13252 / RB50) (Alcaligenes bronchisepticus)).